The sequence spans 305 residues: Acetaldehyde dehydrogenase (305 aa).

The active-site Acyl-thioester intermediate is C130. NAD(+) contacts are provided by residues 161–169 (SVGPGTRKN) and N272.

The protein belongs to the acetaldehyde dehydrogenase family.

It carries out the reaction acetaldehyde + NAD(+) + CoA = acetyl-CoA + NADH + H(+). The protein is Acetaldehyde dehydrogenase of Leptothrix cholodnii (strain ATCC 51168 / LMG 8142 / SP-6) (Leptothrix discophora (strain SP-6)).